A 289-amino-acid polypeptide reads, in one-letter code: ATP phosphoribosyltransferase (289 aa).

This sequence belongs to the ATP phosphoribosyltransferase family. Long subfamily. Mg(2+) serves as cofactor.

The protein resides in the cytoplasm. It carries out the reaction 1-(5-phospho-beta-D-ribosyl)-ATP + diphosphate = 5-phospho-alpha-D-ribose 1-diphosphate + ATP. It participates in amino-acid biosynthesis; L-histidine biosynthesis; L-histidine from 5-phospho-alpha-D-ribose 1-diphosphate: step 1/9. Feedback inhibited by histidine. Functionally, catalyzes the condensation of ATP and 5-phosphoribose 1-diphosphate to form N'-(5'-phosphoribosyl)-ATP (PR-ATP). Has a crucial role in the pathway because the rate of histidine biosynthesis seems to be controlled primarily by regulation of HisG enzymatic activity. The polypeptide is ATP phosphoribosyltransferase (Methanosarcina mazei (strain ATCC BAA-159 / DSM 3647 / Goe1 / Go1 / JCM 11833 / OCM 88) (Methanosarcina frisia)).